The following is a 259-amino-acid chain: Insulin-like growth factor-binding protein 4 (259 aa).

A signal peptide spans Met-1–Gly-22. The IGFBP N-terminal domain occupies Glu-24–Leu-104. Intrachain disulfides connect Cys-28/Cys-54, Cys-31/Cys-56, Cys-39/Cys-57, Cys-45/Cys-60, Cys-68/Cys-81, and Cys-75/Cys-101. The tract at residues Gln-115 to Asp-136 is disordered. Asn-126 carries N-linked (GlcNAc...) asparagine glycosylation. 4 disulfides stabilise this stretch: Cys-132–Cys-139, Cys-175–Cys-205, Cys-216–Cys-227, and Cys-229–Cys-250. A Thyroglobulin type-1 domain is found at Gln-172 to Cys-250. Ser-256 carries the post-translational modification Phosphoserine.

Binds IGF2 more than IGF1.

It is found in the secreted. Its function is as follows. IGF-binding proteins prolong the half-life of the IGFs and have been shown to either inhibit or stimulate the growth promoting effects of the IGFs on cell culture. They alter the interaction of IGFs with their cell surface receptors. The protein is Insulin-like growth factor-binding protein 4 (IGFBP4) of Sus scrofa (Pig).